A 98-amino-acid polypeptide reads, in one-letter code: NADH-ubiquinone oxidoreductase chain 4L (98 aa).

Transmembrane regions (helical) follow at residues 1-21, 26-46, and 61-81; these read MSPI…GMLV, LMAS…MIAL, and IILL…LVSI.

Belongs to the complex I subunit 4L family. In terms of assembly, core subunit of respiratory chain NADH dehydrogenase (Complex I) which is composed of 45 different subunits.

It localises to the mitochondrion inner membrane. It carries out the reaction a ubiquinone + NADH + 5 H(+)(in) = a ubiquinol + NAD(+) + 4 H(+)(out). Its function is as follows. Core subunit of the mitochondrial membrane respiratory chain NADH dehydrogenase (Complex I) which catalyzes electron transfer from NADH through the respiratory chain, using ubiquinone as an electron acceptor. Part of the enzyme membrane arm which is embedded in the lipid bilayer and involved in proton translocation. The protein is NADH-ubiquinone oxidoreductase chain 4L (MT-ND4L) of Chlorocebus sabaeus (Green monkey).